Here is a 92-residue protein sequence, read N- to C-terminus: Putative regulatory protein Tpet_0986 (92 aa).

It belongs to the RemA family.

The protein is Putative regulatory protein Tpet_0986 of Thermotoga petrophila (strain ATCC BAA-488 / DSM 13995 / JCM 10881 / RKU-1).